The sequence spans 159 residues: Small heat shock protein hspM (159 aa).

Residues 1 to 159 form the sHSP domain; that stretch reads MFVLNFELAG…LSNNIKIQIN (159 aa). Residues 35–101 are disordered; it reads MNNNNKNNLQ…NNNNKSSKTN (67 aa). 2 stretches are compositionally biased toward low complexity: residues 36 to 46 and 61 to 95; these read NNNNKNNLQIN and SSSS…NNNN.

This sequence belongs to the small heat shock protein (HSP20) family.

The sequence is that of Small heat shock protein hspM (hspM) from Dictyostelium discoideum (Social amoeba).